Consider the following 573-residue polypeptide: N(2)-(2-carboxyethyl)arginine synthase (573 aa).

The substrate site is built by Y271 and D301. A thiamine diphosphate-binding site is contributed by 410 to 413 (IGFF). Substrate is bound at residue 414–415 (RH). A thiamine diphosphate-binding site is contributed by 436 to 438 (SSF). D463 contacts Mg(2+). Thiamine diphosphate-binding positions include 464-465 (GG), 490-495 (NDTNGL), and Y561. Mg(2+) is bound by residues N490 and T492. L571 is a binding site for substrate.

Homotetramer; dimer of dimers. The cofactor is Mg(2+). Thiamine diphosphate serves as cofactor.

The catalysed reaction is D-glyceraldehyde 3-phosphate + L-arginine = N(2)-(2-carboxyethyl)-L-arginine + phosphate + H(+). Its function is as follows. Involved in the biosynthesis of the beta-lactamase inhibitor, clavulanic acid. Catalyzes the thiamine diphosphate (ThDP) dependent condensation of D-glyceraldehyde-3-phosphate (D-G3P) with L-arginine to yield the beta-amino acid, N2-(2-carboxyethyl)arginine (CEA) via a beta-elimination resulting in the formation of an enol which undergoes a second elimination to generate the alpha,beta-unsaturated acryloyl-ThDP. In Streptomyces clavuligerus, this protein is N(2)-(2-carboxyethyl)arginine synthase.